The chain runs to 458 residues: Gamma aminobutyrate transaminase 2 (458 aa).

114–115 is a pyridoxal 5'-phosphate binding site; that stretch reads GS. Y147 lines the substrate pocket. D254 is a binding site for pyridoxal 5'-phosphate. K283 is a substrate binding site. N6-(pyridoxal phosphate)lysine is present on K283.

This sequence belongs to the class-III pyridoxal-phosphate-dependent aminotransferase family. In terms of tissue distribution, expressed in leaves, roots, stems, flowers and fruits. Expressed in carpels, but not in stamens.

Its subcellular location is the cytoplasm. It carries out the reaction 4-aminobutanoate + pyruvate = succinate semialdehyde + L-alanine. The enzyme catalyses 4-aminobutanoate + glyoxylate = succinate semialdehyde + glycine. Transaminase that degrades gamma-amino butyric acid (GABA) and uses pyruvate or glyoxylate as amino-group acceptor. Cannot use beta-alanine, ornithine, acetylornithine, serine, glycine, asparagine, glutamine, glutamate, valine, leucine, isoleucine, methionine, phenylalanine, histidine, lysine, arginine, aspartate, threonine, tyrosine, tryptophan, proline, or cysteine as amino donors. May be responsible for establishing the GABA gradient in the carpel. The chain is Gamma aminobutyrate transaminase 2 (GABA-TP2) from Solanum lycopersicum (Tomato).